Reading from the N-terminus, the 187-residue chain is MKILFCDVLLLSLLSSVFSSCPRDCLTCQEKLHPAPDSFNLKTCILQCEEKVFPRPLWTVCTKVMASGSGQLSPADPELVSAALYQPKASEMQHLKRMPRVRSLVQVRDAEPGADAEPGADAEPGADDAEEVEQKQLQKRFGGFTGARKSARKLANQKRFSEFMRQYLVLSMQSSQRRRTLHQNGNV.

The N-terminal stretch at 1–19 (MKILFCDVLLLSLLSSVFS) is a signal peptide. Positions 20–95 (SCPRDCLTCQ…QPKASEMQHL (76 aa)) are excised as a propeptide. 3 consecutive repeat copies span residues 109-114 (DAEPGA), 115-120 (DAEPGA), and 121-126 (DAEPGA). The tract at residues 109–126 (DAEPGADAEPGADAEPGA) is 3 X 6 AA tandem repeats of D-A-E-P-G-A. The segment at 109–133 (DAEPGADAEPGADAEPGADDAEEVE) is disordered. Acidic residues predominate over residues 112–131 (PGADAEPGADAEPGADDAEE). Residues 180 to 187 (TLHQNGNV) constitute a propeptide that is removed on maturation.

Belongs to the opioid neuropeptide precursor family. In terms of processing, specific enzymatic cleavages at paired basic residues probably yield other active peptides besides nociceptin. The N-terminal domain contains 6 conserved cysteines thought to be involved in disulfide bonding and/or processing. Brain and spinal cord. Low levels in kidney and spleen.

The protein resides in the secreted. Ligand of the opioid receptor-like receptor OPRL1. It may act as a transmitter in the brain by modulating nociceptive and locomotor behavior. May be involved in neuronal differentiation and development. When administered intracerebroventricularly, nociceptin induces hyperalgesia and decreases locomotor activity. Functionally, blocks nociceptin action in pain transmission by inhibiting nociceptin-induced hyperalgesia and allodynia. In terms of biological role, has potent analgesic activity. The chain is Prepronociceptin (Pnoc) from Mus musculus (Mouse).